The sequence spans 304 residues: uncharacterized protein (304 aa).

This is an uncharacterized protein from Acanthamoeba polyphaga (Amoeba).